The chain runs to 318 residues: tRNA uridine(34) hydroxylase (318 aa).

In terms of domain architecture, Rhodanese spans 125-219 (QDPNTVVIDA…YGTSKDTEGK (95 aa)). C179 serves as the catalytic Cysteine persulfide intermediate.

Belongs to the TrhO family.

The catalysed reaction is uridine(34) in tRNA + AH2 + O2 = 5-hydroxyuridine(34) in tRNA + A + H2O. Catalyzes oxygen-dependent 5-hydroxyuridine (ho5U) modification at position 34 in tRNAs. This Acholeplasma laidlawii (strain PG-8A) protein is tRNA uridine(34) hydroxylase.